We begin with the raw amino-acid sequence, 788 residues long: Ribosome biogenesis protein ERB1 (788 aa).

Residues 1–91 (MGDLKGSRKR…SKPIREKSKP (91 aa)) form a disordered region. Over residues 38 to 50 (LSDKSHDTEHSSD) the composition is skewed to basic and acidic residues. The span at 51–78 (SEIELVDDLSSDDGEEYEDEFDSDEIPS) shows a compositional bias: acidic residues. Positions 80 to 91 (IESKPIREKSKP) are enriched in basic and acidic residues. 6 WD repeats span residues 433-472 (GHSG…QIWS), 476-516 (SDEE…PEME), 613-651 (KGGG…LVKI), 654-699 (PGAR…RPYK), 703-742 (YHQK…DLLS), and 758-788 (TGEL…RLWT).

This sequence belongs to the WD repeat BOP1/ERB1 family. Component of the NOP7 complex, composed of ERB1, NOP7 and YTM1. The complex is held together by ERB1, which interacts with NOP7 via its N-terminal domain and with YTM1 via a high-affinity interaction between the seven-bladed beta-propeller domains of the 2 proteins. The NOP7 complex associates with the 66S pre-ribosome.

Its subcellular location is the nucleus. The protein localises to the nucleolus. The protein resides in the nucleoplasm. Functionally, component of the NOP7 complex, which is required for maturation of the 25S and 5.8S ribosomal RNAs and formation of the 60S ribosome. This is Ribosome biogenesis protein ERB1 from Ajellomyces capsulatus (strain NAm1 / WU24) (Darling's disease fungus).